A 281-amino-acid polypeptide reads, in one-letter code: Ribulose-5-phosphate-3-epimerase, chloroplastic (281 aa).

A chloroplast-targeting transit peptide spans 1–45 (MSTSAASLCCSSTQVNGFGLRPERSLLYQPTSFSFSRRRTHGIVK). Serine 63 is a binding site for substrate. A divalent metal cation-binding residues include histidine 88, aspartate 90, and histidine 121. Aspartate 90 (proton acceptor) is an active-site residue. Residues histidine 121, 199–202 (GFGG), 232–234 (DGG), and 254–256 (GSA) contribute to the substrate site. A divalent metal cation is bound at residue aspartate 232. The Proton donor role is filled by aspartate 232.

The protein belongs to the ribulose-phosphate 3-epimerase family. In terms of assembly, homooctamer. It depends on Co(2+) as a cofactor. Fe(2+) serves as cofactor. The cofactor is Mn(2+). Requires Zn(2+) as cofactor. Present in roots, seeds and flowers. Accumulates in nematode feeding sites (NFS).

It localises to the plastid. It is found in the chloroplast thylakoid membrane. The catalysed reaction is D-ribulose 5-phosphate = D-xylulose 5-phosphate. It participates in carbohydrate biosynthesis; Calvin cycle. Its function is as follows. Essential protein required during embryogenesis. Catalyzes the reversible epimerization of D-ribulose 5-phosphate to D-xylulose 5-phosphate. Essential for the early steps of nematode feeding sites (NFS, multinucleated root cells) formation induced by the root-knot nematodes Heterodera schachtii, Meloidogyne incognita, M.javanica and M.hapla. This is Ribulose-5-phosphate-3-epimerase, chloroplastic from Arabidopsis thaliana (Mouse-ear cress).